The following is a 219-amino-acid chain: 3,4-dihydroxy-2-butanone 4-phosphate synthase (219 aa).

Residues R28–E29, D33, R140–T144, and E164 contribute to the D-ribulose 5-phosphate site. E29 contacts Mg(2+). Residue H143 participates in Mg(2+) binding.

It belongs to the DHBP synthase family. As to quaternary structure, homodimer. Mg(2+) serves as cofactor. The cofactor is Mn(2+).

It catalyses the reaction D-ribulose 5-phosphate = (2S)-2-hydroxy-3-oxobutyl phosphate + formate + H(+). Its pathway is cofactor biosynthesis; riboflavin biosynthesis; 2-hydroxy-3-oxobutyl phosphate from D-ribulose 5-phosphate: step 1/1. Functionally, catalyzes the conversion of D-ribulose 5-phosphate to formate and 3,4-dihydroxy-2-butanone 4-phosphate. This Methanocorpusculum labreanum (strain ATCC 43576 / DSM 4855 / Z) protein is 3,4-dihydroxy-2-butanone 4-phosphate synthase.